The sequence spans 1128 residues: Nck-associated protein 1 (1128 aa).

Residues 640–665 (AVNKKSKKQTGKKGEPEREKPGVESM) form a disordered region. Positions 651–665 (KKGEPEREKPGVESM) are enriched in basic and acidic residues. A helical transmembrane segment spans residues 995–1015 (IACLLMVFVAVSLPTLASNVM).

Belongs to the HEM-1/HEM-2 family.

It is found in the cell membrane. The protein localises to the cell projection. It localises to the lamellipodium membrane. Its function is as follows. Part of the WAVE complex that regulates lamellipodia formation. The WAVE complex regulates actin filament reorganization via its interaction with the Arp2/3 complex. Actin remodeling activity is regulated by RAC1. Plays a role in neural tube closure. The protein is Nck-associated protein 1 (nckap1) of Xenopus laevis (African clawed frog).